The primary structure comprises 666 residues: N-acetylgalactosaminyltransferase 6 (666 aa).

Residues 1-11 (MRRPNLKWIVK) lie on the Cytoplasmic side of the membrane. Residues 12-31 (ASLLLLISLTLFVLITSWIS) traverse the membrane as a helical; Signal-anchor for type II membrane protein segment. At 32-666 (STPYTNKPVH…NYSQDLVLSL (635 aa)) the chain is on the lumenal side. Positions 90-126 (EPVEEEVDNPHPADDEPQQQPQEELQMAAPADASVKK) are disordered. A compositionally biased stretch (low complexity) spans 107–120 (QQQPQEELQMAAPA). Residue asparagine 181 is glycosylated (N-linked (GlcNAc...) asparagine). 5 disulfides stabilise this stretch: cysteine 192-cysteine 421, cysteine 412-cysteine 491, cysteine 531-cysteine 548, cysteine 577-cysteine 594, and cysteine 621-cysteine 636. The segment at 201-311 (LPTVSVIIIF…YNWLPPLLEP (111 aa)) is catalytic subdomain A. Substrate is bound by residues aspartate 242 and arginine 272. Asparagine 285 carries N-linked (GlcNAc...) asparagine glycosylation. Aspartate 295 is a Mn(2+) binding site. Substrate is bound at residue serine 296. Histidine 297 provides a ligand contact to Mn(2+). The interval 367 to 429 (PFKSPIMAGG…PCSRIGHIYR (63 aa)) is catalytic subdomain B. Tryptophan 398 contributes to the substrate binding site. Histidine 426 provides a ligand contact to Mn(2+). Arginine 429 lines the substrate pocket. A Ricin B-type lectin domain is found at 518–648 (AMGALQNVGN…DNRFQQWNFG (131 aa)). N-linked (GlcNAc...) asparagine glycans are attached at residues asparagine 651 and asparagine 657.

This sequence belongs to the glycosyltransferase 2 family. GalNAc-T subfamily. The cofactor is Mn(2+). As to expression, expressed during oogenesis, in the somatically derived follicle cells that surround the developing oocyte, which are involved in the maturation of the oocyte and construction of the egg shell, as well as playing a role in subsequent embryonic pattern formation. Expressed in the salivary glands from embryonic stage 12 onwards, becoming stronger at stage 13. During embryonic stages 12-13, also expressed in the posterior midgut and hindgut. During embryonic stages 14-15, expression continues in the hindgut. Expression is detected in the epidermis and antennomaxillary complex during embryonic stages 16-17. In third instar larvae, ubiquitously expressed in wing, eye-antennal, leg and haltere imaginal disks.

It localises to the golgi apparatus membrane. It carries out the reaction L-seryl-[protein] + UDP-N-acetyl-alpha-D-galactosamine = a 3-O-[N-acetyl-alpha-D-galactosaminyl]-L-seryl-[protein] + UDP + H(+). It catalyses the reaction L-threonyl-[protein] + UDP-N-acetyl-alpha-D-galactosamine = a 3-O-[N-acetyl-alpha-D-galactosaminyl]-L-threonyl-[protein] + UDP + H(+). It functions in the pathway protein modification; protein glycosylation. Glycopeptide transferase involved in O-linked oligosaccharide biosynthesis, which catalyzes the transfer of an N-acetyl-D-galactosamine residue to an already glycosylated peptide. In contrast to other proteins of the family, it does not act as a peptide transferase that transfers GalNAc onto serine or threonine residue on the protein receptor, but instead requires the prior addition of a GalNAc on a peptide before adding additional GalNAc moieties. Some peptide transferase activity is however not excluded, considering that its appropriate peptide substrate may remain unidentified. Prefers the diglycosylated Muc5AC-3/13 as substrate. Might have a role in protein O-glycosylation in the Golgi and thereby in establishing and/or maintaining a proper secretory apparatus structure. This chain is N-acetylgalactosaminyltransferase 6, found in Drosophila melanogaster (Fruit fly).